Here is a 448-residue protein sequence, read N- to C-terminus: MESERSCLLSSHDAGKGGSSSVSSASFNFINSIIGSGIIGLPYSMSQAGLPMGLLLLILVAFITDYSIILLVRGGNLSGTHSYQSLVRSTFGQIGYIIVSVLQFLYPFIAMISYNIIAGDTLTKVFMRIPGVGPGNILTERHFVIAMSTVLFTLPLSLYRDIAKLGKVSLLSMILTFGILMTVVVRAATLGPQIPASDDAWVFARWNAIQAVAVMSFALICHHNSFMIYGSLQEPTLSRWSLVTHISVGSSVLVSAVFAAAGYATFTVYTQGDIFENYCRSDNLATFGRFCYGVSIITTFPLECFVTREVISNALFKGGELSKSSHVIITLVIISATTAISLSYDCLGIVLELNGILSAVPLMFIFPSACFLKLSNERWCRGENLIASMILVAGVFVMIIGLIMMALFPQDCSHGAEMFYCSASNTSSTASPSNILQFINTTQNTSIV.

Residues 1–20 (MESERSCLLSSHDAGKGGSS) are disordered. The next 11 helical transmembrane spans lie at 22 to 42 (VSSASFNFINSIIGSGIIGLP), 52 to 72 (MGLLLLILVAFITDYSIILLV), 94 to 114 (IGYIIVSVLQFLYPFIAMISY), 143 to 163 (FVIAMSTVLFTLPLSLYRDIA), 165 to 185 (LGKVSLLSMILTFGILMTVVV), 200 to 220 (AWVFARWNAIQAVAVMSFALI), 246 to 266 (ISVGSSVLVSAVFAAAGYATF), 286 to 306 (TFGRFCYGVSIITTFPLECFV), 324 to 344 (SSHVIITLVIISATTAISLSY), 346 to 366 (CLGIVLELNGILSAVPLMFIF), and 389 to 409 (MILVAGVFVMIIGLIMMALFP). 3 N-linked (GlcNAc...) asparagine glycosylation sites follow: Asn425, Asn440, and Asn444.

Belongs to the amino acid/polyamine transporter 2 family.

The protein localises to the membrane. Putative sodium-dependent amino acid/proton antiporter. The sequence is that of Putative sodium-coupled neutral amino acid transporter 11 (slc38a11) from Danio rerio (Zebrafish).